The chain runs to 737 residues: MALVKYSTVFFPLRSLRLFVSIKKAYYHSEPHSIDLFHDKDWIVKRPKFLNLPKNEHSKLDIFQFNFNKSESNNVYLQDSSFKDNLDKAMQFIYNDKLSSLDAKQVPIKNLAWLKLRDYIYQQLKDPKLQAKTYVPSVSEIIHPSSPGNLISLLINCNKISNLVWKSVLKYSLSNNITTLDKFIHVLQQTFDHVYEQEILPMMTNTDDTDGAHNVDITNPAEWFPEARKIRRHIIMHIGPTNSGKTYRALQKLKSVDRGYYAGPLRLLAREVYDRFHAEKIRCNLLTGEEVIRDLDDRGNSAGLTSGTVEMVPINQKFDVVVLDEIQMMSDGDRGWAWTNALLGVVSKEVHLCGEKSVLPLVKSIVKMTGDKLTINEYERLGKLSVEEKPIKDGIKGLRKGDCVVAFSKKKILDLKLKIEKDTNLKVAVIYGSLPPETRVQQAALFNNGEYDIMVASDAIGMGLNLSIDRVVFTTNMKYNGEELMEMTSSQIKQIGGRAGRFKSRSASGGVPQGFITSFESKVLKSVRKAIEAPVEYLKTAVTWPTDEICAQLMTQFPPGTPTSVLLQTISDELEKSSDNLFTLSDLKSKLKVIGLFEHMEDIPFFDKLKLSNAPVKDMPMVTKAFTKFCETIAKRHTRGLLSYRLPFNLLDYNCIPNESYSLEVYESLYNIITLYFWLSNRYPNYFIDMESAKDLKYFCEMIIFEKLDRLKKNPYAHKPFGSTRGHLSSSRRRLRT.

A mitochondrion-targeting transit peptide spans 1 to 25 (MALVKYSTVFFPLRSLRLFVSIKKA). One can recognise a Helicase ATP-binding domain in the interval 226–365 (EARKIRRHII…KSVLPLVKSI (140 aa)). Residue 239–246 (GPTNSGKT) coordinates ATP. Positions 390–546 (PIKDGIKGLR…YLKTAVTWPT (157 aa)) constitute a Helicase C-terminal domain.

This sequence belongs to the helicase family. In terms of assembly, MSU1 and SUV3 are the two components of the mitochondrial degradosome (mtEXO).

It is found in the mitochondrion matrix. The enzyme catalyses ATP + H2O = ADP + phosphate + H(+). Required for intron-independent turnover and processing of mitochondrial RNA. It is a key control element in nuclear-mitochondrial interactions. The polypeptide is ATP-dependent RNA helicase SUV3, mitochondrial (SUV3) (Saccharomyces cerevisiae (strain ATCC 204508 / S288c) (Baker's yeast)).